Consider the following 355-residue polypeptide: Putative GPI-anchor transamidase (355 aa).

The first 24 residues, 1–24 (MFNIMLVKFVVIFALILASCRVEA), serve as a signal peptide directing secretion. Catalysis depends on residues His-165 and Cys-207.

The protein belongs to the peptidase C13 family.

Its pathway is glycolipid biosynthesis; glycosylphosphatidylinositol-anchor biosynthesis. In terms of biological role, mediates GPI anchoring in the endoplasmic reticulum, by replacing a protein's C-terminal GPI attachment signal peptide with a pre-assembled GPI. During this transamidation reaction, the GPI transamidase forms a carbonyl intermediate with the substrate protein. The chain is Putative GPI-anchor transamidase from Drosophila melanogaster (Fruit fly).